A 230-amino-acid polypeptide reads, in one-letter code: RNA chaperone ProQ (230 aa).

The tract at residues 106–181 (AKARVQAQRA…EERHTPVSDI (76 aa)) is disordered. Basic and acidic residues predominate over residues 146–155 (RRKDNAERKP). Over residues 158 to 167 (AKPAAAAKPS) the composition is skewed to low complexity.

Belongs to the ProQ family.

It localises to the cytoplasm. Functionally, RNA chaperone with significant RNA binding, RNA strand exchange and RNA duplexing activities. May regulate ProP activity through an RNA-based, post-transcriptional mechanism. This is RNA chaperone ProQ from Cronobacter sakazakii (strain ATCC BAA-894) (Enterobacter sakazakii).